Here is an 843-residue protein sequence, read N- to C-terminus: Protein MEI2-like 2 (843 aa).

2 consecutive RRM domains span residues 198-271 (RTLF…FSIP) and 283-356 (GTLV…LSRP).

In terms of biological role, probable RNA-binding protein that plays a role in meiosis and vegetative growth. The protein is Protein MEI2-like 2 (ML2) of Arabidopsis thaliana (Mouse-ear cress).